An 855-amino-acid polypeptide reads, in one-letter code: Cone cGMP-specific 3',5'-cyclic phosphodiesterase subunit alpha' (855 aa).

2 GAF domains span residues 70-219 (SVEL…SIIL) and 251-428 (DVER…GWSL). 3',5'-cyclic GMP-binding positions include S92, S116, 164–167 (DKQT), and T171. Residues 481–814 (EEKQLVTILK…VEWKSLADEY (334 aa)) enclose the PDEase domain. H557 acts as the Proton donor in catalysis. Positions 561, 597, 598, and 718 each coordinate a divalent metal cation. The interval 823–855 (EMKKQEEGNTTEKAVEDSGGGGDDKKSKTCLML) is disordered. C852 is modified (cysteine methyl ester). C852 carries S-geranylgeranyl cysteine lipidation. A propeptide spans 853–855 (LML) (removed in mature form).

It belongs to the cyclic nucleotide phosphodiesterase family. Composed of two alpha' subunits that are associated with 3 smaller proteins of 11, 13, and 15 kDa. A divalent metal cation serves as cofactor.

Its subcellular location is the cell membrane. The catalysed reaction is 3',5'-cyclic GMP + H2O = GMP + H(+). Its function is as follows. As cone-specific cGMP phosphodiesterase, it plays an essential role in light detection and cone phototransduction by rapidly decreasing intracellular levels of cGMP. This is Cone cGMP-specific 3',5'-cyclic phosphodiesterase subunit alpha' (PDE6C) from Bos taurus (Bovine).